We begin with the raw amino-acid sequence, 323 residues long: Secreted frizzled-related protein 3 (323 aa).

A signal peptide spans 1–32 (MVCCGPGRMLLGWAGLLVLAALCLLQVPGAQA). An FZ domain is found at 33–150 (AACEPVRIPL…VYDRGVCISP (118 aa)). Intrachain disulfides connect Cys-35-Cys-96, Cys-43-Cys-89, Cys-80-Cys-119, Cys-108-Cys-147, and Cys-112-Cys-136. N-linked (GlcNAc...) asparagine glycosylation occurs at Asn-49. Residues 178-298 (CKCKPVRATQ…WDMKLRHLGL (121 aa)) enclose the NTR domain. A disordered region spans residues 299–323 (GKTDASDSTQNQKSGRNSNPRPARS). Over residues 304 to 323 (SDSTQNQKSGRNSNPRPARS) the composition is skewed to polar residues.

The protein belongs to the secreted frizzled-related protein (sFRP) family. As to quaternary structure, interacts with MYOC. Expressed in kidney, brain, testis. Weak expression in spleen and heart.

The protein localises to the secreted. Functionally, soluble frizzled-related proteins (sFRPS) function as modulators of Wnt signaling through direct interaction with Wnts. They have a role in regulating cell growth and differentiation in specific cell types. SFRP3/FRZB appears to be involved in limb skeletogenesis. Antagonist of Wnt8 signaling. Regulates chondrocyte maturation and long bone development. This Mus musculus (Mouse) protein is Secreted frizzled-related protein 3 (Frzb).